Here is a 433-residue protein sequence, read N- to C-terminus: Cyclin-dependent kinase F-3 (433 aa).

One can recognise a Protein kinase domain in the interval 4–283 (YKVIREIGDG…AEQSLQHPFF (280 aa)). Residues 10–18 (IGDGTCGNV) and lysine 33 each bind ATP. Aspartate 125 (proton acceptor) is an active-site residue. At serine 151 the chain carries Phosphoserine. Threonine 156 is modified (phosphothreonine).

Belongs to the protein kinase superfamily. CMGC Ser/Thr protein kinase family. CDC2/CDKX subfamily.

The enzyme catalyses L-seryl-[protein] + ATP = O-phospho-L-seryl-[protein] + ADP + H(+). The catalysed reaction is L-threonyl-[protein] + ATP = O-phospho-L-threonyl-[protein] + ADP + H(+). It catalyses the reaction [DNA-directed RNA polymerase] + ATP = phospho-[DNA-directed RNA polymerase] + ADP + H(+). The sequence is that of Cyclin-dependent kinase F-3 (CDKF-3) from Oryza sativa subsp. japonica (Rice).